Consider the following 203-residue polypeptide: MPKAPKGKSVGQEKKVIHPYSRKAAQITRKAHKQEKKEELKNEKALRLNLIGEKLQWFQNHLDPKKVGYSKRDACELIERYLNRFSSELEQIELRNSFKDRQGRRHCSREAAIRQTLEREQRQYQAHGLEIPDILNADNLKTFREWDFDLKKLPNIKMRKVCASDAVPKKCKKKAVTTIDGDLGELELKDESSDTDEEMTAVA.

The tract at residues 1 to 40 (MPKAPKGKSVGQEKKVIHPYSRKAAQITRKAHKQEKKEEL) is disordered. Position 9 is an ADP-ribosylserine (Ser-9).

The protein belongs to the TMA16 family. In terms of assembly, associates with pre-60S ribosomal particles.

It is found in the nucleus. Its function is as follows. Involved in the biogenesis of the 60S ribosomal subunit in the nucleus. The chain is Translation machinery-associated protein 16 (TMA16) from Bos taurus (Bovine).